Reading from the N-terminus, the 360-residue chain is Histidinol-phosphate aminotransferase (360 aa).

At Lys213 the chain carries N6-(pyridoxal phosphate)lysine.

This sequence belongs to the class-II pyridoxal-phosphate-dependent aminotransferase family. Histidinol-phosphate aminotransferase subfamily. In terms of assembly, homodimer. Requires pyridoxal 5'-phosphate as cofactor.

It carries out the reaction L-histidinol phosphate + 2-oxoglutarate = 3-(imidazol-4-yl)-2-oxopropyl phosphate + L-glutamate. Its pathway is amino-acid biosynthesis; L-histidine biosynthesis; L-histidine from 5-phospho-alpha-D-ribose 1-diphosphate: step 7/9. This is Histidinol-phosphate aminotransferase from Baumannia cicadellinicola subsp. Homalodisca coagulata.